A 404-amino-acid chain; its full sequence is Probable oxalate decarboxylase ARB_04859 (404 aa).

A signal peptide spans 1-17 (MKYSAVLVAALAAIADA). The region spanning 74–215 (FSLSKTRMLY…NFGVPPSTFD (142 aa)) is the Cupin type-1 1 domain. Positions 117, 119, 123, and 162 each coordinate Mn(2+). Residues asparagine 226 and asparagine 244 are each glycosylated (N-linked (GlcNAc...) asparagine). Residues 249–393 (FHISNAPEIQ…AINVPIEVIE (145 aa)) enclose the Cupin type-1 2 domain. 4 residues coordinate Mn(2+): histidine 296, histidine 298, glutamate 303, and histidine 342. A glycan (N-linked (GlcNAc...) asparagine) is linked at asparagine 346. Glutamate 357 functions as the Proton donor in the catalytic mechanism.

Mn(2+) serves as cofactor.

Its subcellular location is the secreted. The enzyme catalyses oxalate + H(+) = formate + CO2. In terms of biological role, converts oxalate to formate and CO(2) in an O(2)-dependent reaction. Can also catalyze minor side reactions: oxalate oxidation to produce H(2)O(2), and oxalate-dependent, H(2)O(2)-independent dye oxidations. The sequence is that of Probable oxalate decarboxylase ARB_04859 from Arthroderma benhamiae (strain ATCC MYA-4681 / CBS 112371) (Trichophyton mentagrophytes).